Here is a 302-residue protein sequence, read N- to C-terminus: MQQLLNEILDEVRPLIGRGKVADYIPALAGVEPNQLGIAVYSRDGELFHAGDALRPFSIQSISKVFSLVQAIQHSGEDIWQRLGHEPSGQPFNSLVQLEFERGKPRNPFINAGALVICDINQSRFAAPAQSMRDFVRRLCGNPEVVSDSVVARSEYQHRSRNAAAAYLMKSFGNFHNDVEAVLFSYFHHCALRMSCVDLARAFCFLADKGFCKHSGEQVLNERQTKQVNAIMATSGLYDEAGNFAYRVGLPGKSGVGGGIIAVVPGRFTVCVWSPELNAAGNSLAGIAALEKLSERIGWSIF.

Positions 61, 111, 155, 162, 186, 238, and 256 each coordinate substrate.

This sequence belongs to the glutaminase family. As to quaternary structure, homotetramer.

The enzyme catalyses L-glutamine + H2O = L-glutamate + NH4(+). This Pseudomonas aeruginosa (strain ATCC 15692 / DSM 22644 / CIP 104116 / JCM 14847 / LMG 12228 / 1C / PRS 101 / PAO1) protein is Glutaminase.